The following is a 391-amino-acid chain: Multidrug resistance protein MdtL (391 aa).

The next 12 membrane-spanning stretches (helical) occupy residues 4–24 (FLIC…MYLV), 42–62 (IAFS…GKVA), 69–89 (PVAI…SLAE), 93–113 (LFLA…VVAF), 131–151 (LLNG…HLIM), 158–178 (SLFW…LFIL), 203–222 (FFLS…LTFV), 245–265 (ALTA…LGIF), 269–289 (TLMI…AVSP), 293–313 (ISLF…GVAM), 324–346 (AGVA…IWLA), and 363–383 (ACSI…PVAA).

It belongs to the major facilitator superfamily. DHA1 family. MdtL (TC 2.A.1.2.22) subfamily.

It is found in the cell inner membrane. Confers resistance to chloramphenicol. The chain is Multidrug resistance protein MdtL from Escherichia fergusonii (strain ATCC 35469 / DSM 13698 / CCUG 18766 / IAM 14443 / JCM 21226 / LMG 7866 / NBRC 102419 / NCTC 12128 / CDC 0568-73).